A 114-amino-acid chain; its full sequence is UPF0060 membrane protein GDI3492/Gdia_2889 (114 aa).

4 consecutive transmembrane segments (helical) span residues 8–28 (FAVY…WWCW), 35–55 (AWVL…LTLV), 64–84 (FAAY…LVEG), and 92–112 (AAGV…GRGA).

It belongs to the UPF0060 family.

The protein localises to the cell inner membrane. The polypeptide is UPF0060 membrane protein GDI3492/Gdia_2889 (Gluconacetobacter diazotrophicus (strain ATCC 49037 / DSM 5601 / CCUG 37298 / CIP 103539 / LMG 7603 / PAl5)).